The chain runs to 131 residues: Squamosa promoter-binding protein 1 (131 aa).

Residues 1–10 (MDTSKGEGKR) show a composition bias toward basic and acidic residues. Residues 1–52 (MDTSKGEGKRVIKLPGSQEQGEEEDDIGEDSKKTRALTPSGKRASGSTQRSC) form a disordered region. Residues 49–126 (QRSCQVENCA…AGHNERRRKS (78 aa)) form an SBP-type zinc finger. Positions 52, 57, 74, 77, 93, 96, 100, and 112 each coordinate Zn(2+). The short motif at 109–125 (KRSCRRRLAGHNERRRK) is the Bipartite nuclear localization signal element.

The protein resides in the nucleus. Functionally, probable transcriptional factor. Binds to the promoter of the SQUAMOSA gene. This chain is Squamosa promoter-binding protein 1 (SBP1), found in Antirrhinum majus (Garden snapdragon).